Here is a 495-residue protein sequence, read N- to C-terminus: ATP synthase subunit beta, chloroplastic (495 aa).

172–179 is an ATP binding site; the sequence is GGAGVGKT.

It belongs to the ATPase alpha/beta chains family. As to quaternary structure, F-type ATPases have 2 components, CF(1) - the catalytic core - and CF(0) - the membrane proton channel. CF(1) has five subunits: alpha(3), beta(3), gamma(1), delta(1), epsilon(1). CF(0) has four main subunits: a(1), b(1), b'(1) and c(9-12).

The protein localises to the plastid. It localises to the chloroplast thylakoid membrane. It catalyses the reaction ATP + H2O + 4 H(+)(in) = ADP + phosphate + 5 H(+)(out). Its function is as follows. Produces ATP from ADP in the presence of a proton gradient across the membrane. The catalytic sites are hosted primarily by the beta subunits. This Brimeura amethystina (Spanish hyacinth) protein is ATP synthase subunit beta, chloroplastic.